Reading from the N-terminus, the 312-residue chain is Pre-mRNA-splicing factor 38A (312 aa).

Positions 1 to 179 (MANRTVKDAH…VLEEAEQLEP (179 aa)) are N-terminal protein interaction domain. Phosphoserine is present on residues serine 11, serine 193, serine 194, serine 209, and serine 226. A coiled-coil region spans residues 170–204 (VLEEAEQLEPRVSALEEDMDDVESSEEEEEEDEKL). A disordered region spans residues 181–312 (VSALEEDMDD…SHKKSRRGNE (132 aa)). A compositionally biased stretch (acidic residues) spans 184–202 (LEEDMDDVESSEEEEEEDE). Residues 203–224 (KLERVPSPDHRRRSYRDLDKPR) show a composition bias toward basic and acidic residues. Basic residues-rich tracts occupy residues 225–294 (RSPA…RSHS) and 301–312 (KKSHKKSRRGNE).

This sequence belongs to the PRP38 family. Component of the spliceosome B complex. Interacts (via N-terminal interaction domain) with ZMAT2 and MFAP1.

It is found in the nucleus. Involved in pre-mRNA splicing as a component of the spliceosome. The chain is Pre-mRNA-splicing factor 38A (Prpf38a) from Mus musculus (Mouse).